Consider the following 198-residue polypeptide: Cell division protein SepF (198 aa).

A disordered region spans residues 170 to 198 (EVPQPPARPARPASTNPPAWGNETNRMAQ). The segment covering 179 to 188 (ARPASTNPPA) has biased composition (low complexity).

The protein belongs to the SepF family. In terms of assembly, homodimer. Interacts with FtsZ.

The protein resides in the cytoplasm. Cell division protein that is part of the divisome complex and is recruited early to the Z-ring. Probably stimulates Z-ring formation, perhaps through the cross-linking of FtsZ protofilaments. Its function overlaps with FtsA. This is Cell division protein SepF from Nostoc sp. (strain PCC 7120 / SAG 25.82 / UTEX 2576).